The primary structure comprises 493 residues: Galactose-1-phosphate uridylyltransferase (493 aa).

Belongs to the galactose-1-phosphate uridylyltransferase type 2 family.

The protein localises to the cytoplasm. The catalysed reaction is alpha-D-galactose 1-phosphate + UDP-alpha-D-glucose = alpha-D-glucose 1-phosphate + UDP-alpha-D-galactose. The protein operates within carbohydrate metabolism; galactose metabolism. This chain is Galactose-1-phosphate uridylyltransferase, found in Streptococcus pneumoniae serotype 19F (strain G54).